The primary structure comprises 278 residues: Thioredoxin-related transmembrane protein 1 (278 aa).

An N-terminal signal peptide occupies residues 1–26 (MAHLGRLMVPLAALVLLLWAVPGAHG). The Thioredoxin domain occupies 27–132 (RRNNVRVLTD…FINFVSDKEW (106 aa)). At 27-181 (RRNNVRVLTD…DLGIPAWGSY (155 aa)) the chain is on the extracellular side. Residues Cys-56 and Cys-59 each act as nucleophile in the active site. An intrachain disulfide couples Cys-56 to Cys-59. The helical transmembrane segment at 182–202 (LVFAFATVLSGLLLGLCMIFV) threads the bilayer. At 203-278 (ADCLCPSKRR…VGLPSATDTS (76 aa)) the chain is on the cytoplasmic side. 2 S-palmitoyl cysteine lipidation sites follow: Cys-205 and Cys-207. A compositionally biased stretch (polar residues) spans 217-226 (QYAKKTSPEF). The segment at 217–278 (QYAKKTSPEF…VGLPSATDTS (62 aa)) is disordered. A compositionally biased stretch (acidic residues) spans 235 to 251 (EEQEADEEDVSEEEAED). 2 positions are modified to phosphoserine: Ser-245 and Ser-278.

Interacts with ATP2A2. In terms of processing, palmitoylated; palmitoylation is required for localization to mitochondria-associated endoplasmic reticulum membrane (MAM).

The protein resides in the endoplasmic reticulum membrane. Its subcellular location is the mitochondrion membrane. It is found in the secreted. The enzyme catalyses Catalyzes the rearrangement of -S-S- bonds in proteins.. Functionally, thiredoxin domain-containing protein that participates in various redox reactions through the reversible oxidation of its active center dithiol to a disulfide and catalyze dithiol-disulfide exchange reactions. Acts as a key inhibitor of the alternative triglyceride biosynthesis pathway by inhibiting the activity of TMEM68/DIESL at the endoplasmic reticulum, thereby restricting accumulation of triacylglycerol. The alternative triglyceride biosynthesis pathway mediates formation of triacylglycerol from diacylglycerol and membrane phospholipids. Acts as a protein disulfide isomerase by catalyzing formation or reduction of disulfide bonds. Specifically mediates formation of disulfide bonds of transmembrane proteins at the endoplasmic reticulum membrane. Involved in ER-associated degradation (ERAD) via its protein disulfide isomerase activity by acting on folding-defective polypeptides at the endoplasmic reticulum membrane. Acts as a negative regulator of platelet aggregation following secretion in the extracellular space. Acts as a regulator of endoplasmic reticulum-mitochondria contact sites via its ability to regulate redox signals. Regulates endoplasmic reticulum-mitochondria Ca(2+) flux. This is Thioredoxin-related transmembrane protein 1 from Mus musculus (Mouse).